A 925-amino-acid chain; its full sequence is Serine/threonine-protein phosphatase 1 regulatory subunit 10 (925 aa).

The segment at 1–348 is interaction with TOX4; sequence MGSGPIDPKE…EPAPPSEAMD (348 aa). In terms of domain architecture, TFIIS N-terminal spans 73-147; sequence KLLNNWLTYS…SDWMAVIRSQ (75 aa). The tract at residues 147 to 211 is disordered; it reads QSSTQPAEKD…APSHAKFRST (65 aa). 2 stretches are compositionally biased toward basic and acidic residues: residues 153–166 and 174–196; these read AEKD…EGKS and PLTE…EKPK. Glycyl lysine isopeptide (Lys-Gly) (interchain with G-Cter in SUMO2) cross-links involve residues Lys-179 and Lys-262. 3 disordered regions span residues 304-398, 536-555, and 587-890; these read KIKK…KRKT, TLEP…SKLP, and SIMG…HGGD. At Ser-313 the chain carries Phosphoserine. Over residues 325–336 the composition is skewed to low complexity; sequence KTSTEPSTAKPS. The necessary for interaction with PPP1CA stretch occupies residues 357 to 433; that stretch reads PPVEVPELMD…NKIKDFGEAA (77 aa). A Phosphoserine modification is found at Ser-382. Residues 393–408 form a necessary for interaction with PPP1CC region; sequence GRKRKTVTWPEEGKLR. A PP1-binding motif motif is present at residues 394–423; that stretch reads RKRKTVTWPEEGKLREYFYFELDETERVNV. Residue Thr-398 is modified to Phosphothreonine; by PKA. Positions 418 to 619 are interaction with WDR82; it reads TERVNVNKIK…IKQMLVPHGL (202 aa). Gly residues predominate over residues 540 to 551; that stretch reads GGAGGSPDGAGG. 2 positions are modified to phosphoserine: Ser-545 and Ser-591. Over residues 596-611 the composition is skewed to basic and acidic residues; the sequence is PSEELLKQPDYSDKIK. A compositionally biased stretch (pro residues) spans 644-655; sequence PPGPGGPMPGPH. The span at 656–665 shows a compositional bias: gly residues; the sequence is GGPGGPGGPV. Arg-668 is modified (omega-N-methylarginine). Positions 679 to 693 are enriched in low complexity; the sequence is GDPFWDGPGDPMRGG. 2 positions are modified to omega-N-methylarginine: Arg-696 and Arg-741. Gly residues-rich tracts occupy residues 728–766 and 775–829; these read ARGG…GMSS and GPGG…AGGG. Basic and acidic residues-rich tracts occupy residues 846–871 and 879–890; these read PHDV…HDGP and RGHDGGHNHGGD. A C3H1-type zinc finger spans residues 891 to 919; the sequence is MSKRPVCRHFMMKGNCRYENNCAFYHPGV.

As to quaternary structure, component of the PNUTS-PP1 complex (also named PTW/PP1 complex), composed of PPP1R10/PNUTS, TOX4, WDR82, and PPP1CA (or PPP1CB or PPP1CC). In terms of processing, phosphorylated on Ser-398 by PKA within the region necessary for interaction with PPP1CA.

It is found in the nucleus. The protein localises to the chromosome. Functionally, substrate-recognition component of the PNUTS-PP1 protein phosphatase complex, a protein phosphatase 1 (PP1) complex that promotes RNA polymerase II transcription pause-release, allowing transcription elongation. Promoter-proximal pausing by RNA polymerase II is a transcription halt following transcription initiation but prior to elongation, which acts as a checkpoint to control that transcripts are favorably configured for transcriptional elongation. The PNUTS-PP1 complex mediates the release of RNA polymerase II from promoter-proximal region of genes by catalyzing dephosphorylation of proteins involved in transcription, such as AFF4, CDK9, MEPCE, INTS12, NCBP1, POLR2M/GDOWN1 and SUPT6H. The PNUTS-PP1 complex also regulates RNA polymerase II transcription termination by mediating dephosphorylation of SUPT5H in termination zones downstream of poly(A) sites, thereby promoting deceleration of RNA polymerase II transcription. PNUTS-PP1 complex is also involved in the response to replication stress by mediating dephosphorylation of POLR2A at 'Ser-5' of the CTD, promoting RNA polymerase II degradation. The PNUTS-PP1 complex also plays a role in the control of chromatin structure and cell cycle progression during the transition from mitosis into interphase. PNUTS-PP1 complex mediates dephosphorylation of MYC, promoting MYC stability by preventing MYC ubiquitination by the SCF(FBXW7) complex. In addition to acts as a substrate-recognition component, PPP1R10/PNUTS also acts as a nuclear targeting subunit for the PNUTS-PP1 complex. In some context, PPP1R10/PNUTS also acts as an inhibitor of protein phosphatase 1 (PP1) activity by preventing access to substrates, such as RB. This Sus scrofa (Pig) protein is Serine/threonine-protein phosphatase 1 regulatory subunit 10 (PPP1R10).